Consider the following 101-residue polypeptide: Immunity protein CdiI-2 (101 aa).

In terms of assembly, specifically interacts with the truncated CT fragment of cognate toxin protein CdiA-2, which inhibits CdiA-2 tRNA nuclease activity.

In terms of biological role, immunity protein component of a toxin-immunity protein module, which functions as a cellular contact-dependent growth inhibition (CDI) system. CDI modules allow bacteria to communicate with and inhibit the growth of closely related neighboring bacteria in a contact-dependent fashion. Neutralizes the toxic activity of cognate toxin CdiA (C-terminal 301 residue CT fragment) upon expression in E.coli. Does not inhibit toxic activity of CdiA from other strains of B.pseudomallei. Its function is as follows. Expression of this cdiAIB locus in B.thailandensis confers protection against other bacteria carrying the locus; growth inhibition requires cellular contact. In Burkholderia pseudomallei (strain 1026b), this protein is Immunity protein CdiI-2 (cdiI2).